Here is a 496-residue protein sequence, read N- to C-terminus: Transactivator/viroplasmin protein (496 aa).

Positions 102–128 are disordered; that stretch reads RPNQGIQIPKKNEDHSSSSSKEEKGIQ. The segment covering 111–128 has biased composition (basic and acidic residues); sequence KKNEDHSSSSSKEEKGIQ.

The protein belongs to the caulimoviridae viroplasmin family.

Its subcellular location is the host cytoplasm. Enhances the translation of downstream ORFs on polycistronic mRNAs derived from carnation etched ring virus. In Dianthus caryophyllus (Carnation), this protein is Transactivator/viroplasmin protein.